A 54-amino-acid chain; its full sequence is Protein P32 (54 aa).

Residues 4-24 (FGKTLITIVTAIIGVAIIAVI) form a helical membrane-spanning segment.

The protein resides in the virion membrane. Component of the phage injection machinery. Required for DNA injection in the membrane transformation event. Involved in the formation of the membrane tail tube to connect the virus interior with the host cytosol. Essential for viral infectivity. This is Protein P32 (XXXII) from Enterobacteria phage PRD1 (Bacteriophage PRD1).